A 203-amino-acid chain; its full sequence is Large ribosomal subunit protein bL25 (203 aa).

The protein belongs to the bacterial ribosomal protein bL25 family. CTC subfamily. As to quaternary structure, part of the 50S ribosomal subunit; part of the 5S rRNA/L5/L18/L25 subcomplex. Contacts the 5S rRNA. Binds to the 5S rRNA independently of L5 and L18.

In terms of biological role, this is one of the proteins that binds to the 5S RNA in the ribosome where it forms part of the central protuberance. This chain is Large ribosomal subunit protein bL25, found in Rickettsia typhi (strain ATCC VR-144 / Wilmington).